A 195-amino-acid chain; its full sequence is Peptidyl-tRNA hydrolase (195 aa).

Tyrosine 17 contributes to the tRNA binding site. The Proton acceptor role is filled by histidine 22. TRNA contacts are provided by phenylalanine 68, asparagine 70, and asparagine 116.

It belongs to the PTH family. As to quaternary structure, monomer.

It localises to the cytoplasm. It carries out the reaction an N-acyl-L-alpha-aminoacyl-tRNA + H2O = an N-acyl-L-amino acid + a tRNA + H(+). Its function is as follows. Hydrolyzes ribosome-free peptidyl-tRNAs (with 1 or more amino acids incorporated), which drop off the ribosome during protein synthesis, or as a result of ribosome stalling. Catalyzes the release of premature peptidyl moieties from peptidyl-tRNA molecules trapped in stalled 50S ribosomal subunits, and thus maintains levels of free tRNAs and 50S ribosomes. This Shewanella amazonensis (strain ATCC BAA-1098 / SB2B) protein is Peptidyl-tRNA hydrolase.